We begin with the raw amino-acid sequence, 98 residues long: Keratin-associated protein 3-1 (98 aa).

Ala-2 carries the N-acetylalanine modification. 4 tandem repeats follow at residues Cys-3 to Arg-7, Cys-8 to Arg-12, Phe-47 to Ser-51, and Tyr-55 to Asp-59. A 4 X 5 AA repeats of C-C-X(3) region spans residues Cys-3–Asp-59.

It belongs to the KRTAP type 3 family. Interacts with wool keratins. In terms of tissue distribution, wool.

Functionally, in the wool cortex, wool keratin intermediate filaments are embedded in an interfilamentous matrix, consisting of hair keratin-associated proteins (KRTAP), which are essential for the formation of a rigid and resistant wool shaft through their extensive disulfide bond cross-linking with abundant cysteine residues of wool keratins. The matrix proteins include the high-sulfur and high-glycine-tyrosine keratins. This is Keratin-associated protein 3-1 (KRTAP3-1) from Capra hircus (Goat).